A 317-amino-acid polypeptide reads, in one-letter code: Thymidylate synthase (317 aa).

DUMP contacts are provided by residues Arg-24 and 179-180 (RR). The Nucleophile role is filled by Cys-199. Residues 219–222 (RSAD), Asn-230, and 260–262 (HIY) each bind dUMP. Asp-222 serves as a coordination point for (6R)-5,10-methylene-5,6,7,8-tetrahydrofolate. Ala-316 lines the (6R)-5,10-methylene-5,6,7,8-tetrahydrofolate pocket.

It belongs to the thymidylate synthase family. Bacterial-type ThyA subfamily. Homodimer.

The protein localises to the cytoplasm. The enzyme catalyses dUMP + (6R)-5,10-methylene-5,6,7,8-tetrahydrofolate = 7,8-dihydrofolate + dTMP. It participates in pyrimidine metabolism; dTTP biosynthesis. Its function is as follows. Catalyzes the reductive methylation of 2'-deoxyuridine-5'-monophosphate (dUMP) to 2'-deoxythymidine-5'-monophosphate (dTMP) while utilizing 5,10-methylenetetrahydrofolate (mTHF) as the methyl donor and reductant in the reaction, yielding dihydrofolate (DHF) as a by-product. This enzymatic reaction provides an intracellular de novo source of dTMP, an essential precursor for DNA biosynthesis. The chain is Thymidylate synthase from Oceanobacillus iheyensis (strain DSM 14371 / CIP 107618 / JCM 11309 / KCTC 3954 / HTE831).